The chain runs to 89 residues: Small ribosomal subunit protein bS20 (89 aa).

The segment covering 1–12 (MANIKSAKKRAK) has biased composition (basic residues). Residues 1–24 (MANIKSAKKRAKQTVVRNERNTGQ) are disordered.

The protein belongs to the bacterial ribosomal protein bS20 family.

In terms of biological role, binds directly to 16S ribosomal RNA. In Xanthomonas campestris pv. campestris (strain 8004), this protein is Small ribosomal subunit protein bS20.